The chain runs to 255 residues: Ribosomal RNA small subunit methyltransferase G 2 (255 aa).

G90, F95, and R155 together coordinate S-adenosyl-L-methionine. Over residues 233–245 the composition is skewed to acidic residues; that stretch reads EDEGEELLMDELS. A disordered region spans residues 233–255; it reads EDEGEELLMDELSNEEKRRWAKY. The segment covering 246–255 has biased composition (basic and acidic residues); that stretch reads NEEKRRWAKY.

This sequence belongs to the methyltransferase superfamily. RNA methyltransferase RsmG family.

It is found in the cytoplasm. It catalyses the reaction guanosine(527) in 16S rRNA + S-adenosyl-L-methionine = N(7)-methylguanosine(527) in 16S rRNA + S-adenosyl-L-homocysteine. Its function is as follows. Specifically methylates the N7 position of guanine in position 527 of 16S rRNA. This chain is Ribosomal RNA small subunit methyltransferase G 2, found in Bdellovibrio bacteriovorus (strain ATCC 15356 / DSM 50701 / NCIMB 9529 / HD100).